The primary structure comprises 122 residues: MIQMQSTLDVACNSGARRVQCIKVLGGSHRRYAGIGDIIKVSVKEAIPRAKAKKGDVYNAVVVRTKKGVRRPDGSVIRFDRNAAVLLNANLAPIGTRIFGPVTRELRNDKFMKIVSLAPEVL.

The protein belongs to the universal ribosomal protein uL14 family. Part of the 50S ribosomal subunit. Forms a cluster with proteins L3 and L19. In the 70S ribosome, L14 and L19 interact and together make contacts with the 16S rRNA in bridges B5 and B8.

Binds to 23S rRNA. Forms part of two intersubunit bridges in the 70S ribosome. The polypeptide is Large ribosomal subunit protein uL14 (Shewanella frigidimarina (strain NCIMB 400)).